The following is a 418-amino-acid chain: Actin-related protein 3 (418 aa).

This sequence belongs to the actin family. ARP3 subfamily. In terms of assembly, component of the Arp2/3 complex.

The protein resides in the cytoplasm. Its subcellular location is the cytoskeleton. In terms of biological role, functions as ATP-binding component of the Arp2/3 complex which is involved in regulation of actin polymerization and together with an activating nucleation-promoting factor (NPF) mediates the formation of branched actin networks. Seems to contact the pointed end of the daughter actin filament. Required during embryogenesis for the developmental migration of tail hemocytes anteriorly, along the ventral midline. The protein is Actin-related protein 3 of Drosophila melanogaster (Fruit fly).